The primary structure comprises 295 residues: UDP-N-acetylenolpyruvoylglucosamine reductase (295 aa).

Residues 23–188 form the FAD-binding PCMH-type domain; the sequence is QVGGPADFLA…ISAKFALKPG (166 aa). The active site involves Arg-167. Ser-217 serves as the catalytic Proton donor. The active site involves Glu-287.

The protein belongs to the MurB family. FAD serves as cofactor.

It localises to the cytoplasm. It catalyses the reaction UDP-N-acetyl-alpha-D-muramate + NADP(+) = UDP-N-acetyl-3-O-(1-carboxyvinyl)-alpha-D-glucosamine + NADPH + H(+). Its pathway is cell wall biogenesis; peptidoglycan biosynthesis. Cell wall formation. This chain is UDP-N-acetylenolpyruvoylglucosamine reductase, found in Streptococcus equi subsp. zooepidemicus (strain H70).